A 430-amino-acid chain; its full sequence is Maintenance of mitochondrial morphology protein 1 (430 aa).

Over 1-82 (MTEIDPNINE…ISNTWNFTQG (82 aa)) the chain is Lumenal. Residues 83-103 (LVVGQLSVIFLIIIFVKFFVF) traverse the membrane as a helical segment. The Cytoplasmic segment spans residues 104–430 (ADSSSSIPSK…AKPKDSDDTL (327 aa)). 2 stretches are compositionally biased toward basic and acidic residues: residues 126-138 (RDNKSTTSRDRHN) and 335-346 (ENGKGSSSEDKK). Disordered regions lie at residues 126-154 (RDNKSTTSRDRHNGIGGKDSNLEPSTDDE) and 315-346 (QADQVARPSNGHTSTDNGNDENGKGSSSEDKK). Residues 178-408 (ASESLDWFNV…EPRFQVVKLP (231 aa)) enclose the SMP-LTD domain.

This sequence belongs to the MMM1 family. As to quaternary structure, homodimer. Component of the ER-mitochondria encounter structure (ERMES) or MDM complex, composed of MMM1, MDM10, MDM12 and MDM34. An MMM1 homodimer associates with one molecule of MDM12 on each side in a pairwise head-to-tail manner, and the SMP-LTD domains of MMM1 and MDM12 generate a continuous hydrophobic tunnel for phospholipid trafficking.

The protein resides in the endoplasmic reticulum membrane. Component of the ERMES/MDM complex, which serves as a molecular tether to connect the endoplasmic reticulum (ER) and mitochondria. Components of this complex are involved in the control of mitochondrial shape and protein biogenesis, and function in nonvesicular lipid trafficking between the ER and mitochondria. The MDM12-MMM1 subcomplex functions in the major beta-barrel assembly pathway that is responsible for biogenesis of all outer membrane beta-barrel proteins, and acts in a late step after the SAM complex. The MDM10-MDM12-MMM1 subcomplex further acts in the TOM40-specific pathway after the action of the MDM12-MMM1 complex. Essential for establishing and maintaining the structure of mitochondria and maintenance of mtDNA nucleoids. The sequence is that of Maintenance of mitochondrial morphology protein 1 from Lodderomyces elongisporus (strain ATCC 11503 / CBS 2605 / JCM 1781 / NBRC 1676 / NRRL YB-4239) (Yeast).